We begin with the raw amino-acid sequence, 547 residues long: Chaperonin GroEL 1 (547 aa).

ATP-binding positions include 30–33 (TLGP), K51, 87–91 (DGTTT), G415, and D496. The interval 525-547 (KPEPKSPAGGPGMGGMGGMDGMM) is disordered. Residues 533–547 (GGPGMGGMGGMDGMM) show a composition bias toward gly residues.

It belongs to the chaperonin (HSP60) family. As to quaternary structure, forms a cylinder of 14 subunits composed of two heptameric rings stacked back-to-back. Interacts with the co-chaperonin GroES.

The protein localises to the cytoplasm. The enzyme catalyses ATP + H2O + a folded polypeptide = ADP + phosphate + an unfolded polypeptide.. Its function is as follows. Together with its co-chaperonin GroES, plays an essential role in assisting protein folding. The GroEL-GroES system forms a nano-cage that allows encapsulation of the non-native substrate proteins and provides a physical environment optimized to promote and accelerate protein folding. The polypeptide is Chaperonin GroEL 1 (Cereibacter sphaeroides (strain ATCC 17023 / DSM 158 / JCM 6121 / CCUG 31486 / LMG 2827 / NBRC 12203 / NCIMB 8253 / ATH 2.4.1.) (Rhodobacter sphaeroides)).